The primary structure comprises 112 residues: Probable fatty acid-binding protein (112 aa).

The protein belongs to the calycin superfamily. Fatty-acid binding protein (FABP) family.

This Anopheles gambiae (African malaria mosquito) protein is Probable fatty acid-binding protein.